A 176-amino-acid polypeptide reads, in one-letter code: Ferritin heavy polypeptide-like 17E (176 aa).

The Ferritin-like diiron domain occupies 10 to 159; sequence QNYDWQCEDA…GYLTNLRQMG (150 aa). The Fe cation site is built by cysteine 27, glutamate 107, and glutamine 141.

Belongs to the ferritin family. Expressed in the testes and spermatogonia.

The sequence is that of Ferritin heavy polypeptide-like 17E from Mus musculus (Mouse).